The chain runs to 510 residues: MERELVIVVDFGGQYNQLIARRVRENNVYCEIVPYTYSVDKIKEKNPRGIIFTGGPNSVYDDNAPKISEDIFEIGVPVLGICYGHQLICTTLGGKVESAQVREYGKTDVVLNNSSGLFSGIDKNESCWMSHTDFVSYPPEGFKIIGKSGESPVAAVENIDKKIYGVQFHPEVEHTPFGKKMLSNFLFDICNLKGDWSMSSFVDEKIKSIKEEVGDKKVICAMSGGVDSSVAAMIVHKAVGKQLTCIFVDHGLLRKDEGDQVEDIFKKQFNMNFIRVNAEKRFLQKLKDISDPEKKRKIIGEEFIRVFEEEAKKLGEIAFLVQGTIYPDVVESGLGTSATIKSHHNVGGLPEDMDFKLIEPLRELFKDEVRAVGEELGIPHKLVWRQPFPGPGLAIRVLGNITEEKLQITRDADAIFREEIAKANLDETIWQYFACLPNIRSVGVMGDERTYCYTIALRAVISTDAMTSDWARIPYEVLDKVSRRIVNEVKGVNRIVYDITSKPPATIEWE.

The 191-residue stretch at 5–195 (LVIVVDFGGQ…LFDICNLKGD (191 aa)) folds into the Glutamine amidotransferase type-1 domain. Residue Cys-82 is the Nucleophile of the active site. Active-site residues include His-169 and Glu-171. Positions 196 to 385 (WSMSSFVDEK…LGIPHKLVWR (190 aa)) constitute a GMPS ATP-PPase domain. 223-229 (SGGVDSS) is an ATP binding site.

Homodimer.

It carries out the reaction XMP + L-glutamine + ATP + H2O = GMP + L-glutamate + AMP + diphosphate + 2 H(+). It functions in the pathway purine metabolism; GMP biosynthesis; GMP from XMP (L-Gln route): step 1/1. In terms of biological role, catalyzes the synthesis of GMP from XMP. The chain is GMP synthase [glutamine-hydrolyzing] from Clostridium kluyveri (strain NBRC 12016).